The chain runs to 341 residues: Ketol-acid reductoisomerase (NADP(+)) (341 aa).

The KARI N-terminal Rossmann domain occupies 1–182; sequence MATIYYDKDA…GCTRAGVLET (182 aa). NADP(+) contacts are provided by residues 25–28, Ser51, Ser53, and 83–86; these read YGSQ and DQTQ. His108 is an active-site residue. Residue Gly134 coordinates NADP(+). Residues 183 to 328 enclose the KARI C-terminal knotted domain; the sequence is TFKEETETDL…KRLRDMMSWI (146 aa). Mg(2+) contacts are provided by Asp191, Glu195, Glu227, and Glu231. Ser252 serves as a coordination point for substrate.

The protein belongs to the ketol-acid reductoisomerase family. Mg(2+) is required as a cofactor.

The catalysed reaction is (2R)-2,3-dihydroxy-3-methylbutanoate + NADP(+) = (2S)-2-acetolactate + NADPH + H(+). It carries out the reaction (2R,3R)-2,3-dihydroxy-3-methylpentanoate + NADP(+) = (S)-2-ethyl-2-hydroxy-3-oxobutanoate + NADPH + H(+). It functions in the pathway amino-acid biosynthesis; L-isoleucine biosynthesis; L-isoleucine from 2-oxobutanoate: step 2/4. It participates in amino-acid biosynthesis; L-valine biosynthesis; L-valine from pyruvate: step 2/4. Its function is as follows. Involved in the biosynthesis of branched-chain amino acids (BCAA). Catalyzes an alkyl-migration followed by a ketol-acid reduction of (S)-2-acetolactate (S2AL) to yield (R)-2,3-dihydroxy-isovalerate. In the isomerase reaction, S2AL is rearranged via a Mg-dependent methyl migration to produce 3-hydroxy-3-methyl-2-ketobutyrate (HMKB). In the reductase reaction, this 2-ketoacid undergoes a metal-dependent reduction by NADPH to yield (R)-2,3-dihydroxy-isovalerate. The chain is Ketol-acid reductoisomerase (NADP(+)) from Anaeromyxobacter dehalogenans (strain 2CP-C).